A 194-amino-acid chain; its full sequence is Inosine triphosphate pyrophosphatase (194 aa).

10 to 15 (TTNLKK) contributes to the ITP binding site. Glutamate 36 contributes to the Mg(2+) binding site. ITP-binding positions include lysine 48, 66-67 (DT), lysine 83, lysine 166, and 171-172 (HR).

This sequence belongs to the HAM1 NTPase family. Homodimer. Mg(2+) serves as cofactor. Mn(2+) is required as a cofactor.

Its subcellular location is the cytoplasm. It is found in the nucleus. It carries out the reaction ITP + H2O = IMP + diphosphate + H(+). The enzyme catalyses dITP + H2O = dIMP + diphosphate + H(+). It catalyses the reaction XTP + H2O = XMP + diphosphate + H(+). Functionally, pyrophosphatase that hydrolyzes non-canonical purine nucleotides such as inosine triphosphate (ITP), deoxyinosine triphosphate (dITP) or xanthosine 5'-triphosphate (XTP) to their respective monophosphate derivatives. The enzyme does not distinguish between the deoxy- and ribose forms. Probably excludes non-canonical purines from RNA and DNA precursor pools, thus preventing their incorporation into RNA and DNA and avoiding chromosomal lesions. The protein is Inosine triphosphate pyrophosphatase of Encephalitozoon intestinalis (strain ATCC 50506) (Microsporidian parasite).